The chain runs to 890 residues: DNA mismatch repair protein MutS (890 aa).

Residue 646-653 coordinates ATP; sequence GPNMAGKS.

It belongs to the DNA mismatch repair MutS family.

In terms of biological role, this protein is involved in the repair of mismatches in DNA. It is possible that it carries out the mismatch recognition step. This protein has a weak ATPase activity. This is DNA mismatch repair protein MutS from Hyphomonas neptunium (strain ATCC 15444).